We begin with the raw amino-acid sequence, 190 residues long: ATP synthase subunit b (190 aa).

A helical transmembrane segment spans residues 24–44 (IVGSLICFVVILFFFWKLVLP).

Belongs to the ATPase B chain family. In terms of assembly, F-type ATPases have 2 components, F(1) - the catalytic core - and F(0) - the membrane proton channel. F(1) has five subunits: alpha(3), beta(3), gamma(1), delta(1), epsilon(1). F(0) has three main subunits: a(1), b(2) and c(10-14). The alpha and beta chains form an alternating ring which encloses part of the gamma chain. F(1) is attached to F(0) by a central stalk formed by the gamma and epsilon chains, while a peripheral stalk is formed by the delta and b chains.

It is found in the cell membrane. Its function is as follows. F(1)F(0) ATP synthase produces ATP from ADP in the presence of a proton or sodium gradient. F-type ATPases consist of two structural domains, F(1) containing the extramembraneous catalytic core and F(0) containing the membrane proton channel, linked together by a central stalk and a peripheral stalk. During catalysis, ATP synthesis in the catalytic domain of F(1) is coupled via a rotary mechanism of the central stalk subunits to proton translocation. In terms of biological role, component of the F(0) channel, it forms part of the peripheral stalk, linking F(1) to F(0). The protein is ATP synthase subunit b of Leifsonia xyli subsp. xyli (strain CTCB07).